Here is a 647-residue protein sequence, read N- to C-terminus: Probable squalene--hopene cyclase (647 aa).

A PFTB 1 repeat occupies 67–108 (EAKIGNYLRRTQGAHGGWPLVHDGPFDMSASVKSYFALKMIG). The active-site Proton donor is the Asp-388. 2 PFTB repeats span residues 413–454 (IARG…GALL) and 530–577 (IRKA…ALLG).

It belongs to the terpene cyclase/mutase family.

The catalysed reaction is squalene = hop-22(29)-ene. It carries out the reaction squalene + H2O = hopan-22-ol. It functions in the pathway secondary metabolite biosynthesis; hopanoid biosynthesis. In terms of biological role, catalyzes the cyclization of squalene into hopene. Probably part of an operon y4aABCD involved in the synthesis of an isoprenoid compound. This Sinorhizobium fredii (strain NBRC 101917 / NGR234) protein is Probable squalene--hopene cyclase (shc).